The chain runs to 220 residues: Iron-sulfur cluster repair protein YtfE (220 aa).

It belongs to the RIC family. YtfE subfamily. Homodimer.

It localises to the cytoplasm. Di-iron-containing protein involved in the repair of iron-sulfur clusters damaged by oxidative and nitrosative stress conditions. The protein is Iron-sulfur cluster repair protein YtfE of Enterobacter sp. (strain 638).